The primary structure comprises 383 residues: 8-amino-7-oxononanoate synthase (383 aa).

R23 contacts substrate. Residue 110–111 (GF) participates in pyridoxal 5'-phosphate binding. H135 lines the substrate pocket. Pyridoxal 5'-phosphate contacts are provided by S181, H209, and T235. Position 238 is an N6-(pyridoxal phosphate)lysine (K238). A substrate-binding site is contributed by T351.

This sequence belongs to the class-II pyridoxal-phosphate-dependent aminotransferase family. BioF subfamily. In terms of assembly, homodimer. Requires pyridoxal 5'-phosphate as cofactor.

It carries out the reaction 6-carboxyhexanoyl-[ACP] + L-alanine + H(+) = (8S)-8-amino-7-oxononanoate + holo-[ACP] + CO2. Its pathway is cofactor biosynthesis; biotin biosynthesis. Its function is as follows. Catalyzes the decarboxylative condensation of pimeloyl-[acyl-carrier protein] and L-alanine to produce 8-amino-7-oxononanoate (AON), [acyl-carrier protein], and carbon dioxide. The chain is 8-amino-7-oxononanoate synthase from Aliivibrio fischeri (strain ATCC 700601 / ES114) (Vibrio fischeri).